We begin with the raw amino-acid sequence, 140 residues long: Endoribonuclease YbeY (140 aa).

Histidine 101, histidine 105, and histidine 111 together coordinate Zn(2+).

Belongs to the endoribonuclease YbeY family. Requires Zn(2+) as cofactor.

It localises to the cytoplasm. Single strand-specific metallo-endoribonuclease involved in late-stage 70S ribosome quality control and in maturation of the 3' terminus of the 16S rRNA. The polypeptide is Endoribonuclease YbeY (Aliarcobacter butzleri (strain RM4018) (Arcobacter butzleri)).